Consider the following 430-residue polypeptide: S-adenosylmethionine synthase (430 aa).

His14 provides a ligand contact to ATP. Asp16 contributes to the Mg(2+) binding site. Residue Glu42 participates in K(+) binding. 2 residues coordinate L-methionine: Glu55 and Gln98. A flexible loop region spans residues 98–108; the sequence is QSADINRGVER. ATP-binding positions include 164 to 166, 254 to 255, Asp263, 269 to 270, Ala286, and Lys290; these read DAK, KF, and RK. Asp263 serves as a coordination point for L-methionine. Lys294 lines the L-methionine pocket.

The protein belongs to the AdoMet synthase family. As to quaternary structure, homotetramer; dimer of dimers. Mg(2+) serves as cofactor. It depends on K(+) as a cofactor.

The protein localises to the cytoplasm. The enzyme catalyses L-methionine + ATP + H2O = S-adenosyl-L-methionine + phosphate + diphosphate. Its pathway is amino-acid biosynthesis; S-adenosyl-L-methionine biosynthesis; S-adenosyl-L-methionine from L-methionine: step 1/1. Catalyzes the formation of S-adenosylmethionine (AdoMet) from methionine and ATP. The overall synthetic reaction is composed of two sequential steps, AdoMet formation and the subsequent tripolyphosphate hydrolysis which occurs prior to release of AdoMet from the enzyme. In Bacteroides fragilis (strain ATCC 25285 / DSM 2151 / CCUG 4856 / JCM 11019 / LMG 10263 / NCTC 9343 / Onslow / VPI 2553 / EN-2), this protein is S-adenosylmethionine synthase.